The sequence spans 207 residues: Large ribosomal subunit protein bL17m (207 aa).

Residues 173–200 (EKESEHARLKEDHEDEKTVKKDWKRGDP) are compositionally biased toward basic and acidic residues. Residues 173 to 207 (EKESEHARLKEDHEDEKTVKKDWKRGDPIPRPTYI) are disordered.

Belongs to the bacterial ribosomal protein bL17 family. As to quaternary structure, component of the mitochondrial large ribosomal subunit (mt-LSU). Mature yeast 74S mitochondrial ribosomes consist of a small (37S) and a large (54S) subunit. The 37S small subunit contains a 15S ribosomal RNA (15S mt-rRNA) and at least 32 different proteins. The 54S large subunit contains a 21S rRNA (21S mt-rRNA) and at least 45 different proteins.

It localises to the mitochondrion. Functionally, component of the mitochondrial ribosome (mitoribosome), a dedicated translation machinery responsible for the synthesis of mitochondrial genome-encoded proteins, including at least some of the essential transmembrane subunits of the mitochondrial respiratory chain. The mitoribosomes are attached to the mitochondrial inner membrane and translation products are cotranslationally integrated into the membrane. This chain is Large ribosomal subunit protein bL17m (mrpl8), found in Schizosaccharomyces pombe (strain 972 / ATCC 24843) (Fission yeast).